Consider the following 178-residue polypeptide: MYHQLILMALIGVIMANVVPFSMSNIPEEYKEFIPEEVKNFYKNLSIFLCQILRELASKHATFTNEDAALEALKNKSDKLYQKAVELRNFVKAKIDSLKPDAKAFVDEIIAKVRSLRPEDGQKLDMEKLKQAARDIIAKYEALNEETKEELKATFPNTTKIITNEKFKRIANSFLQKN.

Positions 1–16 (MYHQLILMALIGVIMA) are cleaved as a signal peptide. Coiled-coil stretches lie at residues 67–89 (DAAL…ELRN) and 122–154 (QKLD…LKAT).

Belongs to the fatty-acid and retinol-binding protein (FARBP) family. Not glycosylated.

It is found in the secreted. In terms of biological role, binds retinol and different fatty acids. The polypeptide is Fatty-acid and retinol-binding protein 1 (Litomosoides sigmodontis (Filarial nematode worm)).